The chain runs to 218 residues: Small ribosomal subunit protein uS3c (218 aa).

The region spanning 47–118 (VQKNIRISSG…KLNIAITRIS (72 aa)) is the KH type-2 domain.

The protein belongs to the universal ribosomal protein uS3 family. As to quaternary structure, part of the 30S ribosomal subunit.

The protein localises to the plastid. The protein resides in the chloroplast. This is Small ribosomal subunit protein uS3c (rps3) from Aethionema cordifolium (Lebanon stonecress).